Consider the following 285-residue polypeptide: HTH-type transcriptional regulator MurR (285 aa).

In terms of domain architecture, HTH rpiR-type spans methionine 1–serine 77. A DNA-binding region (H-T-H motif) is located at residues serine 37–glutamine 56. Residues isoleucine 128–glutamate 279 enclose the SIS domain.

Homotetramer.

It participates in amino-sugar metabolism; N-acetylmuramate degradation [regulation]. Represses the expression of the murPQ operon involved in the uptake and degradation of N-acetylmuramic acid (MurNAc). Binds to two adjacent inverted repeats within the operator region. MurNAc 6-phosphate, the substrate of MurQ, is the specific inducer that weakens binding of MurR to the operator. This is HTH-type transcriptional regulator MurR from Shigella boydii serotype 18 (strain CDC 3083-94 / BS512).